Reading from the N-terminus, the 558-residue chain is Serine palmitoyltransferase 1 (558 aa).

Over 1–49 the chain is Lumenal; sequence MAHIPEVLPKSIPIPAFIVTTSSYLWYYFNLVLTQIPGGQFIVSYIKKS. A helical membrane pass occupies residues 50-84; that stretch reads HHDDPYRTTVEIGLILYGIIYYLSKPQQKKSLQAQ. The Cytoplasmic portion of the chain corresponds to 85-341; sequence KPNLSPQEID…GRGLSEHFNM (257 aa). A Phosphothreonine modification is found at Thr-121. The helical transmembrane segment at 342 to 371 threads the bilayer; the sequence is DRATAIDITVGSMATALGSTGGFVLGDSVM. Residues 372-424 lie on the Lumenal side of the membrane; sequence CLHQRIGSNAYCFSACLPAYTVTSVSKVLKLMDSNNDAVQTLQKLSKSLHDSF. Residues 425-457 form a helical membrane-spanning segment; sequence ASDDSLRSYVIVTSSPVSAVLHLQLTPAYRSRK. Over 458 to 558 the chain is Cytoplasmic; the sequence is FGYTCEQLFE…ILACCQESNK (101 aa).

Belongs to the class-II pyridoxal-phosphate-dependent aminotransferase family. As to quaternary structure, LCB1 and LCB2 encode essential subunits of the enzyme and form a heterodimer. Component of the SPOTS complex, at least composed of LCB1/2 (LCB1 and/or LCB2), ORM1/2 (ORM1 and/or ORM2), SAC1 and TSC3. Interacts with LCB2 and TSC3. The cofactor is pyridoxal 5'-phosphate.

The protein localises to the cytoplasm. It is found in the endoplasmic reticulum membrane. It catalyses the reaction L-serine + hexadecanoyl-CoA + H(+) = 3-oxosphinganine + CO2 + CoA. Its pathway is lipid metabolism; sphingolipid metabolism. Functionally, component of serine palmitoyltransferase (SPT), which catalyzes the committed step in the synthesis of sphingolipids, the condensation of serine with palmitoyl CoA to form the long chain base 3-ketosphinganine. The sequence is that of Serine palmitoyltransferase 1 (LCB1) from Saccharomyces cerevisiae (strain ATCC 204508 / S288c) (Baker's yeast).